The sequence spans 320 residues: Olfactory receptor 52W1 (320 aa).

Residues 1–30 lie on the Extracellular side of the membrane; the sequence is MAETLQLNSTFLHPNFFILTGFPGLGSAQT. N-linked (GlcNAc...) asparagine glycosylation is present at N8. A helical membrane pass occupies residues 31 to 51; sequence WLTLVFGPIYLLALLGNGALP. Residues 52–59 are Cytoplasmic-facing; that stretch reads AVVWIDST. The chain crosses the membrane as a helical span at residues 60–80; that stretch reads LHQPMFLLLAILAATDLGLAT. Over 81-104 the chain is Extracellular; sequence SIAPGLLAVLWLGPRSVPYAVCLV. The chain crosses the membrane as a helical span at residues 105–125; the sequence is QMFFVHALTAMESGVLLAMAC. Topologically, residues 126–144 are cytoplasmic; that stretch reads DRAAAIGRPLHYPVLVTKA. The chain crosses the membrane as a helical span at residues 145–165; sequence CVGYAALALALKAVAIVVPFP. Residues 166-201 lie on the Extracellular side of the membrane; it reads LLVAKFEHFQAKTIGHTYCAHMAVVELVVGNTQATN. Residues 202–222 form a helical membrane-spanning segment; it reads LYGLALSLAISGMDILGITGS. The Cytoplasmic portion of the chain corresponds to 223-242; that stretch reads YGLIAHAVLQLPTREAHAKA. The helical transmembrane segment at 243–263 threads the bilayer; the sequence is FGTCSSHICVILAFYIPGLFS. Residues 264–279 are Extracellular-facing; sequence YLTHRFGHHTVPKPVH. A helical transmembrane segment spans residues 280-300; that stretch reads ILLSNIYLLLPPALNPLIYGA. At 301-320 the chain is on the cytoplasmic side; that stretch reads RTKQIRDRLLETFTFRKSPL.

The protein belongs to the G-protein coupled receptor 1 family.

It localises to the cell membrane. Functionally, odorant receptor. The chain is Olfactory receptor 52W1 (OR52W1) from Homo sapiens (Human).